The primary structure comprises 346 residues: MVSSNFYKNLGPRKLTAIIDFLHDIIAPPKIHEDIAIHDIKILQEASPNDISFLSNPKYSEFLKTTKAAACIVPKNFTGEANPNTVLLHAQNPYFAYGKLIDFFYAPIKSYPAKIMKSAIVADSATIGKNCYIGHNVVIEDDVIIGDNSIIEAGSFIGRGVNIGRNARIEQHVSINYAIIGDDVVILAGAKIGQDGFGFSTEKGVHHKISHIGIVKIGNNVEIGANTTIDRGSLQDTIIKDLCRIDNLVQIGHGVKIGKGSIIVAQTGIAGSSTIGKYCTLGGQVGIAGHLNIGDGAQVAAQGGVAQNIEAGKIVGGSPAIPIMDWHRQSIIMKQLLKTSNSKLKK.

Histidine 253 functions as the Proton acceptor in the catalytic mechanism.

It belongs to the transferase hexapeptide repeat family. LpxD subfamily. In terms of assembly, homotrimer.

The catalysed reaction is a UDP-3-O-[(3R)-3-hydroxyacyl]-alpha-D-glucosamine + a (3R)-hydroxyacyl-[ACP] = a UDP-2-N,3-O-bis[(3R)-3-hydroxyacyl]-alpha-D-glucosamine + holo-[ACP] + H(+). Its pathway is bacterial outer membrane biogenesis; LPS lipid A biosynthesis. In terms of biological role, catalyzes the N-acylation of UDP-3-O-acylglucosamine using 3-hydroxyacyl-ACP as the acyl donor. Is involved in the biosynthesis of lipid A, a phosphorylated glycolipid that anchors the lipopolysaccharide to the outer membrane of the cell. In Rickettsia conorii (strain ATCC VR-613 / Malish 7), this protein is UDP-3-O-acylglucosamine N-acyltransferase.